Consider the following 231-residue polypeptide: Ribosyldihydronicotinamide dehydrogenase [quinone] (231 aa).

FAD is bound by residues His-12, 18 to 21 (FNGS), and 104 to 107 (LYWF). 127-129 (FDI) lines the substrate pocket. FAD contacts are provided by residues 148–151 (TTGG) and Tyr-156. Positions 174 and 178 each coordinate Zn(2+). FAD is bound at residue Asp-194. Position 197 is a phosphoserine (Ser-197). Arg-201 serves as a coordination point for FAD. Residue Cys-223 coordinates Zn(2+).

Belongs to the NAD(P)H dehydrogenase (quinone) family. In terms of assembly, homodimer. The cofactor is Zn(2+). It depends on FAD as a cofactor.

The protein localises to the cytoplasm. The enzyme catalyses 1-(beta-D-ribofuranosyl)-1,4-dihydronicotinamide + a quinone + H(+) = beta-nicotinamide D-riboside + a quinol. In terms of biological role, the enzyme apparently serves as a quinone reductase in connection with conjugation reactions of hydroquinones involved in detoxification pathways as well as in biosynthetic processes such as the vitamin K-dependent gamma-carboxylation of glutamate residues in prothrombin synthesis. This chain is Ribosyldihydronicotinamide dehydrogenase [quinone] (Nqo2), found in Mus musculus (Mouse).